A 1006-amino-acid polypeptide reads, in one-letter code: MNHGGNTQAVAPMDPNSIENRYGVDGSQTQKYSYQYSTGSESAPWTGHSVENQAVENGNYSNSNYYHPQPTGPATGNVQEIPNTVSFTISSTSGTANVAQDYSGYTPYQTSSDPHNYSNTGYSNYYSGYQQQPSQSYPQPVGAYQNTGAPQPLSSFQNPGSYAGTPSYSGTYYNPADYQTAGGYQSTNYNNQTAGSYPSTNYSNQTPASNQGNYTDYTSNPYQNYTPDAANTHSSTIATTPPVHYQQNYQQWTEYYSQTEVPCAPGTEKLSTPTTSAYSQSFPVPGVTSEMPASNSQPAPSYVQPWRPETDSSHPPSQQPGAAVSTSNDTYWMHQAPSLQAHHPVPPQNNYQSPLETKPLYETPFQGHQRATYPQEMNSQSSFHQAPLGYRQPTQTAPLVDSQRVSKVQIPTNPRIASNLPSGFTKMDKDSTAASAAQAPAYVSVSMPKPKDHTTAMSDPGTFPKSLRGFVERAFARCKDDKEKESCEVALRKIVKKAKEDNTLYTRDWDTEPLSTVTTTNVTNSESSSAQLSSLQNKSPTRRPKSRWEPLVEGKPFVKPASTFSSAVKFGVWNHQNENNKKSSESFQKVDAATGFKPTYSGQNSAKKSFQRPVKRQRFSGGAATAIDDEASSDSDKDLTPYYSSAMALAGSAEEKKRRDSRSKRFEKIQGHSRGNDLTKPKNANVGNLHSRRATALRLSKVFDESGSRAVEDIDWDALTVKGTCQEIEKRYLRLTSAPDPATVRPEDVLEKALIMVQDSQKNYLFKCDQLKSIRQDLTVQRIHNHLTAKVYETHARLALEAGDLPEYNQCLSQLKTLYAEGVEGCSLEFAAYSLLYITLHSNNNRELLSSMSRLSEEDKKDEAVRHALSVRAAVTSGNYVMFFRLYKTAPNMNSCLMDLYVEKMRYKAVNFMSRSCRPTIPVSYIVQVLGFTGAASEGTDEKETDGMEDCLEWLKTHGANIITDSNGDMLLDTKATSTSLFMPEPEDAVAHGDRNLDVNDFFTRT.

Disordered regions lie at residues 1–75 (MNHG…GPAT), 106–162 (TPYQ…PGSY), 183–239 (GYQS…TIAT), 266–326 (GTEK…AVST), 516–550 (TVTTTNVTNSESSSAQLSSLQNKSPTRRPKSRWEP), 595–638 (GFKP…SDKD), and 650–690 (AGSA…GNLH). Composition is skewed to polar residues over residues 26–75 (GSQT…GPAT) and 106–115 (TPYQTSSDPH). Over residues 116–140 (NYSNTGYSNYYSGYQQQPSQSYPQP) the composition is skewed to low complexity. The segment covering 144–162 (YQNTGAPQPLSSFQNPGSY) has biased composition (polar residues). 2 stretches are compositionally biased toward polar residues: residues 269 to 282 (KLSTPTTSAYSQSF) and 313 to 326 (SHPPSQQPGAAVST). Low complexity predominate over residues 516–539 (TVTTTNVTNSESSSAQLSSLQNKS). Residues 609–618 (SFQRPVKRQR) show a composition bias toward basic residues. Residues 653–680 (AEEKKRRDSRSKRFEKIQGHSRGNDLTK) are compositionally biased toward basic and acidic residues. The PCI domain occupies 804–978 (DLPEYNQCLS…DMLLDTKATS (175 aa)).

It belongs to the SAC3 family. Interacts with EER5, SAC3B and CML20.

The protein localises to the nucleus. Its function is as follows. Component of the TREX-2 complex (transcription and export complex 2), a muliprotein complex that functions in docking export-competent ribonucleoprotein particles (mRNPs) to the nuclear entrance of the nuclear pore complex (nuclear basket). TREX-2 participates in mRNA export and accurate chromatin positioning in the nucleus by tethering genes to the nuclear periphery. This chain is SAC3 family protein A, found in Arabidopsis thaliana (Mouse-ear cress).